The primary structure comprises 246 residues: Serine protease 1 (246 aa).

An N-terminal signal peptide occupies residues 1 to 15 (MKTFIFLALLGATVA). A propeptide spans 16 to 23 (FPIDDDDK) (activation peptide). The 221-residue stretch at 24-244 (IVGGYTCSRN…YVSWIQQTIA (221 aa)) folds into the Peptidase S1 domain. Cystine bridges form between cysteine 30–cysteine 160, cysteine 48–cysteine 64, cysteine 132–cysteine 233, cysteine 139–cysteine 206, cysteine 171–cysteine 185, and cysteine 196–cysteine 220. The active-site Charge relay system is histidine 63. Ca(2+) contacts are provided by glutamate 75, asparagine 77, valine 80, and glutamate 85. Aspartate 107 (charge relay system) is an active-site residue. The active-site Charge relay system is the serine 200.

The protein belongs to the peptidase S1 family. Interacts with SERPINA1. The cofactor is Ca(2+).

Its subcellular location is the secreted. It localises to the extracellular space. It catalyses the reaction Preferential cleavage: Arg-|-Xaa, Lys-|-Xaa.. The sequence is that of Serine protease 1 from Canis lupus familiaris (Dog).